The sequence spans 230 residues: Uracil-DNA glycosylase (230 aa).

Asp-70 serves as the catalytic Proton acceptor.

It belongs to the uracil-DNA glycosylase (UDG) superfamily. UNG family.

It is found in the cytoplasm. It catalyses the reaction Hydrolyzes single-stranded DNA or mismatched double-stranded DNA and polynucleotides, releasing free uracil.. Its function is as follows. Excises uracil residues from the DNA which can arise as a result of misincorporation of dUMP residues by DNA polymerase or due to deamination of cytosine. In Pseudomonas putida (strain GB-1), this protein is Uracil-DNA glycosylase.